A 403-amino-acid polypeptide reads, in one-letter code: 4-hydroxyphenylpyruvate dioxygenase (403 aa).

VOC domains are found at residues 25–169 (GYDH…LVER) and 201–359 (RIDH…LFTK). 3 residues coordinate Fe cation: H204, H287, and E370.

It belongs to the 4HPPD family. As to quaternary structure, homodimer. It depends on Fe cation as a cofactor.

It catalyses the reaction 3-(4-hydroxyphenyl)pyruvate + O2 = homogentisate + CO2. It functions in the pathway amino-acid degradation; L-phenylalanine degradation; acetoacetate and fumarate from L-phenylalanine: step 3/6. Its function is as follows. 4-hydroxyphenylpyruvate dioxygenase; part of the L-tyrosine degradation gene cluster that mediates the biosynthesis of the brownish pigment pyomelanin as an alternative melanin. The 4-hydroxyphenylpyruvate dioxygenase hppD catalyzes the conversion of 4-hydroxyphenylpyruvate to homogentisic acid (HGA). The protein hmgX is crucial for this conversion and thus, probably functions as an accessory factor to mediate specific activity of hppD. The homogentisate 1,2-dioxygenase hmgA is then involved in the cleavage of the aromatic ring of HGA and its conversion to 4-maleylacetoacetate. When hmgA activity is lowered by the cell wall integrity (CWI) signaling pathway, HGA accumulates and leads to the production of pyomelanin through benzoquinone acetic acid after oxidation and polymerization. On the opposite, in non-stress conditions, both hppD and hmgA activities are balanced and HGA is degraded into 4-maleylacetoacetate. 4-maleylacetoacetate is further converted to 4-fumarylacetoacetate by the maleylacetoacetate isomerase maiA, which is degraded into fumarate and acetoacetate by the fumarylacetoacetase fahA. The sequence is that of 4-hydroxyphenylpyruvate dioxygenase from Aspergillus fumigatus (strain ATCC MYA-4609 / CBS 101355 / FGSC A1100 / Af293) (Neosartorya fumigata).